A 55-amino-acid chain; its full sequence is Large ribosomal subunit protein bL33 (55 aa).

This sequence belongs to the bacterial ribosomal protein bL33 family.

This is Large ribosomal subunit protein bL33 from Caulobacter sp. (strain K31).